A 165-amino-acid chain; its full sequence is MLKKLTKIKTEVYALGQHISMSAHKARRVVDQIRGRSYEETLMILELMPYRACYPILKLVYSAAANANYNMDSNESNLVISKAEVSEGTATKKLKPRARGRSFTIKRPTCHIAIVVKDISLDEYQYLGVDFIDSFRCSKKLQSKKKYTAMSYHDMYTNGGIWDKK.

This sequence belongs to the universal ribosomal protein uL22 family. As to quaternary structure, part of the 50S ribosomal subunit.

It is found in the plastid. Its subcellular location is the chloroplast. Functionally, this protein binds specifically to 23S rRNA. Its function is as follows. The globular domain of the protein is located near the polypeptide exit tunnel on the outside of the subunit, while an extended beta-hairpin is found that lines the wall of the exit tunnel in the center of the 70S ribosome. The polypeptide is Large ribosomal subunit protein uL22c (rpl22) (Daucus carota (Wild carrot)).